The primary structure comprises 346 residues: MTPAKAPSHAKKPEAGSQPISSMWTQMFPPKPTYTEEHMPDLSGKIYIVTGASSGVGKETSRMLYSKNAKVYMAMRSGAKAAAAMADIQRAVPKSSGALVILPLDLADLSAVKKAAEEFVSLESSLHGLINNAGVQVLDDTNGEARTAQGHEIHIGVNVLGPFLFTQLLRGVLAATAGRAQPDTVRIVWVSSMGTETIGEKGRGLSADYVDYWPLMSPLERYGLSKAGNWLQGAECAKRYAGDGILSFPINPGHLKSELYREGGTLFKLALRPVLFPPAYGSYVELFAALSPTLSTKDSGAWIVPWGRLYPIRSDLLDATKSAAEGGNGHASAFWDWCEEQVKAFL.

Residues 1-35 (MTPAKAPSHAKKPEAGSQPISSMWTQMFPPKPTYT) form a disordered region. Positions 56, 80, 105, and 132 each coordinate NADP(+). S191 (proton donor) is an active-site residue. The NADP(+) site is built by Y222 and K226. Y222 acts as the Proton acceptor in catalysis. Residue K226 is the Lowers pKa of active site Tyr of the active site.

It belongs to the short-chain dehydrogenases/reductases (SDR) family.

The catalysed reaction is dehydroprobetaenone I + AH2 = probetaenone I + A. It functions in the pathway mycotoxin biosynthesis. Short-chain dehydrogenase/reductase; part of the gene cluster that mediates the biosynthesis of betaenones, phytotoxic polyketides involved in leaf spot disease in sugar beets. The first step of the pathway is the synthesis of dehydroprobetaenone I by the polyketide synthase bet1 and the enoyl reductase bet3 via condensation of one acetyl-CoA starter unit with 7 malonyl-CoA units and 5 methylations. The C-terminal reductase (R) domain of bet1 catalyzes the reductive release of the polyketide chain. Because bet1 lacks a designated enoylreductase (ER) domain, the required activity is provided the enoyl reductase bet3. The short-chain dehydrogenase/reductase bet4 then catalyzes reduction of dehydroprobetaenone I to probetaenone I. The cytochrome P450 monooxygenase bet2 catalyzes successive epoxidation, oxidation (resulting from epoxide opening) and hydroxylation to install a tertiary alcohol in the decaline ring to yield betaenone C from dehydroprobetaenone I and betaenone B from probetaenone I. The FAD-linked oxidoreductase (orf1) is probably responsible for the conversion of betaenone C to betaenone A via an intramolecular aldol reaction between C-1 and C-17 to form the bridged tricyclic system in betaenone A. This chain is Short-chain dehydrogenase/reductase bet4, found in Neocamarosporium betae (Beet black rot fungus).